A 204-amino-acid polypeptide reads, in one-letter code: Thioredoxin-like 4, chloroplastic (204 aa).

The transit peptide at 1 to 27 (MSSLLNISHCSYHGYSGLTSRGGINTV) directs the protein to the chloroplast. A Thioredoxin domain is found at 63-201 (AKSLSQENLV…IDAAILKYTS (139 aa)). Active-site nucleophile residues include Cys-119 and Cys-122. Cys-119 and Cys-122 form a disulfide bridge.

Belongs to the thioredoxin family.

It is found in the plastid. It localises to the chloroplast. Probable thiol-disulfide oxidoreductase that may participate in various redox reactions. This is Thioredoxin-like 4, chloroplastic from Arabidopsis thaliana (Mouse-ear cress).